We begin with the raw amino-acid sequence, 316 residues long: Mannose-6-phosphate isomerase (316 aa).

Q95, H97, E114, and H171 together coordinate Zn(2+). R191 is a catalytic residue.

Belongs to the mannose-6-phosphate isomerase type 1 family. Zn(2+) serves as cofactor.

The enzyme catalyses D-mannose 6-phosphate = D-fructose 6-phosphate. The chain is Mannose-6-phosphate isomerase (pmi) from Streptococcus mutans serotype c (strain ATCC 700610 / UA159).